Reading from the N-terminus, the 277-residue chain is Small ribosomal subunit protein uS3 (277 aa).

A KH type-2 domain is found at 43–111; sequence IRQLMSTGME…QVQLNILEVK (69 aa). Residues 218–228 are compositionally biased toward low complexity; that stretch reads QQAAAAPSRGR. The interval 218–277 is disordered; sequence QQAAAAPSRGRGASDRPGRPGGADRGDRRRRTDRPAAEAAPAAEAPAVEAAAPAVEGGQA. Over residues 229 to 244 the composition is skewed to basic and acidic residues; it reads GASDRPGRPGGADRGD. Residues 254-277 are compositionally biased toward low complexity; sequence AEAAPAAEAPAVEAAAPAVEGGQA.

This sequence belongs to the universal ribosomal protein uS3 family. Part of the 30S ribosomal subunit. Forms a tight complex with proteins S10 and S14.

Functionally, binds the lower part of the 30S subunit head. Binds mRNA in the 70S ribosome, positioning it for translation. The chain is Small ribosomal subunit protein uS3 from Arthrobacter sp. (strain FB24).